Here is a 128-residue protein sequence, read N- to C-terminus: Disintegrin EO4A (128 aa).

A signal peptide spans 1-20; that stretch reads MIPVLLVTICLAVFPFQGSS. A propeptide spanning residues 21 to 47 is cleaved from the precursor; the sequence is IILESGNINDYEIVYPKKVNVLPTGAM. Residues 26-112 enclose the Disintegrin domain; it reads GNINDYEIVY…DCPRNPYKGK (87 aa). Cystine bridges form between cysteine 53–cysteine 76, cysteine 67–cysteine 73, cysteine 72–cysteine 97, and cysteine 85–cysteine 104. The short motif at 89–91 is the Cell attachment site element; that stretch reads RGD. The propeptide occupies 115–128; that stretch reads PMKWPAAAKGSVLM.

The protein belongs to the disintegrin family. Dimeric disintegrin subfamily. Heterodimer with EO5B; disulfide-linked. In terms of tissue distribution, expressed by the venom gland.

The protein resides in the secreted. Poor inhibitor of platelet aggregation. The disintegrin inhibits the adhesion of cells expressing the RGD-dependent integrin alpha-5/beta-1 (ITGA5/ITGB1) to immobilized fibronectin. Inhibition on alpha-2b/beta-3 (ITGA2B/ITGB3) is low. The sequence is that of Disintegrin EO4A from Echis ocellatus (Ocellated saw-scaled viper).